A 286-amino-acid chain; its full sequence is Undecaprenyl-diphosphatase (286 aa).

Transmembrane regions (helical) follow at residues Val-17–Leu-37, Pro-49–Phe-69, Ile-98–Trp-118, Leu-126–Ala-146, Val-159–Val-179, Phe-204–Ala-224, Leu-232–Leu-252, and Thr-261–Ala-281.

Belongs to the UppP family.

It is found in the cell inner membrane. It catalyses the reaction di-trans,octa-cis-undecaprenyl diphosphate + H2O = di-trans,octa-cis-undecaprenyl phosphate + phosphate + H(+). Catalyzes the dephosphorylation of undecaprenyl diphosphate (UPP). Confers resistance to bacitracin. In Synechococcus sp. (strain RCC307), this protein is Undecaprenyl-diphosphatase.